The sequence spans 121 residues: Small ribosomal subunit protein bS6 (121 aa).

The protein belongs to the bacterial ribosomal protein bS6 family.

Its function is as follows. Binds together with bS18 to 16S ribosomal RNA. The polypeptide is Small ribosomal subunit protein bS6 (Rickettsia peacockii (strain Rustic)).